A 251-amino-acid polypeptide reads, in one-letter code: NADPH-dependent oxidoreductase (251 aa).

This sequence belongs to the flavin oxidoreductase frp family. FMN is required as a cofactor.

Its function is as follows. Reduces FMN, organic nitro compounds and disulfide DTNB. Involved in maintenance of the cellular redox state and the disulfide stress response. This chain is NADPH-dependent oxidoreductase (nfrA), found in Staphylococcus epidermidis (strain ATCC 35984 / DSM 28319 / BCRC 17069 / CCUG 31568 / BM 3577 / RP62A).